The following is a 508-amino-acid chain: Maturase K (508 aa).

It belongs to the intron maturase 2 family. MatK subfamily.

The protein localises to the plastid. It localises to the chloroplast. Its function is as follows. Usually encoded in the trnK tRNA gene intron. Probably assists in splicing its own and other chloroplast group II introns. This chain is Maturase K, found in Verbena rigida (Tuberous vervain).